The sequence spans 3391 residues: Genome polyprotein (3391 aa).

Residues 1–15 form an interaction with host EXOC1 region; the sequence is MNDQRKEAKNTPFNM. Residues 1–101 lie on the Cytoplasmic side of the membrane; the sequence is MNDQRKEAKN…LNILNRRRRS (101 aa). The interval 37-72 is hydrophobic; homodimerization of capsid protein C; that stretch reads MLQGRGPLKLYMALVAFLRFLTIPPTAGILKRWGTI. Positions 101–114 are cleaved as a propeptide — ER anchor for the Capsid protein C, removed in mature form by serine protease NS3; it reads SAGMIIMLIPTVMA. A propeptide spans 101–114 (ER anchor for the capsid protein C, removed in mature form by serine protease NS3); that stretch reads SAGMIIMLIPTVMA. Residues 102–122 traverse the membrane as a helical segment; sequence AGMIIMLIPTVMAFHLTTRNG. The Extracellular segment spans residues 123–242; sequence EPHMIVSRQE…HVQRIETWIL (120 aa). Asn183 carries N-linked (GlcNAc...) asparagine; by host glycosylation. A helical transmembrane segment spans residues 243–260; it reads RHPGFTMMAAILAYTIGT. Position 261 (Thr261) is a topological domain, cytoplasmic. Residues 262–280 form a helical membrane-spanning segment; sequence HFQRALILILLTAVTPSMT. Over 281–727 the chain is Extracellular; that stretch reads MRCIGMSNRD…QVFGAIYGAA (447 aa). Intrachain disulfides connect Cys283–Cys310, Cys340–Cys401, Cys354–Cys385, and Cys372–Cys396. A glycan (N-linked (GlcNAc...) asparagine; by host) is linked at Asn347. A fusion peptide region spans residues 378-391; it reads DRGWGNGCGLFGKG. The N-linked (GlcNAc...) asparagine; by host glycan is linked to Asn433. 2 disulfides stabilise this stretch: Cys465/Cys565 and Cys582/Cys613. The helical transmembrane segment at 728–748 threads the bilayer; it reads FSGVSWTMKILIGVIITWIGM. Residues 749–752 lie on the Cytoplasmic side of the membrane; it reads NSRS. Residues 753–773 form a helical membrane-spanning segment; the sequence is TSLSVTLVLVGIVTLYLGVMV. The Extracellular segment spans residues 774–1195; it reads QADSGCVVSW…MVGATMTDDI (422 aa). 6 cysteine pairs are disulfide-bonded: Cys779-Cys790, Cys830-Cys918, Cys954-Cys998, Cys1055-Cys1104, Cys1066-Cys1088, and Cys1087-Cys1091. Residues Asn905 and Asn982 are each glycosylated (N-linked (GlcNAc...) asparagine; by host). An N-linked (GlcNAc...) asparagine; by host glycan is attached at Asn1134. The helical transmembrane segment at 1196–1220 threads the bilayer; it reads GMGVTYLALLAAFKVRPTFAAGLLL. The Cytoplasmic segment spans residues 1221–1226; sequence RKLTSK. A helical transmembrane segment spans residues 1227–1245; the sequence is ELMMTTIGIVLSSQSTIPE. Residues 1246 to 1269 lie on the Lumenal side of the membrane; that stretch reads TILELTDALALGMMVLKMVRNMEK. Residues 1270 to 1290 traverse the membrane as a helical segment; that stretch reads YQLAVTIMAILCVPNAVILQN. Ala1291 is a topological domain (cytoplasmic). A helical transmembrane segment spans residues 1292–1310; sequence WKVSCTILAVVSVSPLFLT. The Lumenal segment spans residues 1311–1317; sequence SSQQKTD. Residues 1318 to 1338 traverse the membrane as a helical segment; the sequence is WIPLALTIKGLNPTAIFLTTL. The Cytoplasmic segment spans residues 1339 to 1346; sequence SRTSKKRS. A helical transmembrane segment spans residues 1347–1367; sequence WPLNEAIMAVGMVSILASSLL. Residues 1368–1370 lie on the Lumenal side of the membrane; that stretch reads KND. The chain crosses the membrane as a helical span at residues 1371–1391; it reads IPMTGPLVAGGLLTVCYVLTG. The Cytoplasmic segment spans residues 1392 to 1447; it reads RSADLELERAADVKWEDQAEISGSSPILSITISEDGSMSIKNEEEEQTLTILIRRG. The tract at residues 1398–1437 is interacts with and activates NS3 protease; sequence LERAADVKWEDQAEISGSSPILSITISEDGSMSIKNEEEE. Residues 1448 to 1468 constitute an intramembrane region (helical); it reads LLVISGLFPVSIPITAAAWYL. Over 1469-2147 the chain is Cytoplasmic; that stretch reads WEVKKQRAGV…LSELPETLET (679 aa). The Peptidase S7 domain occupies 1476–1653; the sequence is AGVLWDVPSP…EKSIEDNPEI (178 aa). Residues His1526, Asp1550, and Ser1610 each act as charge relay system; for serine protease NS3 activity in the active site. Residues 1655–1811 enclose the Helicase ATP-binding domain; the sequence is DDIFRKRRLT…QSNAPIIDEE (157 aa). Residues 1659–1662 are important for RNA-binding; the sequence is RKRR. 1668–1675 is an ATP binding site; that stretch reads LHPGAGKT. The DEAH box motif lies at 1759-1762; sequence DEAH. The region spanning 1821-1988 is the Helicase C-terminal domain; sequence SGHEWVTDFK…IIPSMFEPER (168 aa). Lys1863 carries the post-translational modification N6-acetyllysine; by host. A helical membrane pass occupies residues 2148 to 2168; sequence LLLLTLLATVTGGIFLFLMSA. Residues 2169–2170 are Lumenal-facing; that stretch reads RG. Positions 2171-2191 form an intramembrane region, helical; the sequence is IGKMTLGMCCIITASILLWYA. Residue Gln2192 is a topological domain, lumenal. The chain crosses the membrane as a helical span at residues 2193–2213; the sequence is IQPHWIAASIILEFFLIVLLI. Topologically, residues 2214-2228 are cytoplasmic; that stretch reads PEPEKQRTPQDNQLT. A helical transmembrane segment spans residues 2229–2249; the sequence is YVVIAILTVVAATMANEMGFL. The Lumenal portion of the chain corresponds to 2250–2274; it reads EKTKKDLGLGSIATQQPESNILDID. Positions 2275-2295 form an intramembrane region, helical; it reads LRPASAWTLYAVATTFVTPML. At 2296 to 2316 the chain is on the lumenal side; the sequence is RHSIENSSVNVSLTAIANQAT. 2 N-linked (GlcNAc...) asparagine; by host glycosylation sites follow: Asn2301 and Asn2305. Residues 2317 to 2337 constitute an intramembrane region (helical); that stretch reads VLMGLGKGWPLSKMDIGVPLL. At 2338 to 2347 the chain is on the lumenal side; the sequence is AIGCYSQVNP. A helical membrane pass occupies residues 2348–2368; it reads TTLTAALFLLVAHYAIIGPAL. Residues 2369 to 2413 lie on the Cytoplasmic side of the membrane; that stretch reads QAKASREAQKRAAAGIMKNPTVDGITVIDLDPIPYDPKFEKQLGQ. Residues 2414-2434 traverse the membrane as a helical segment; that stretch reads VMLLVLCVTQVLMMRTTWALC. At 2435–2459 the chain is on the lumenal side; it reads EALTLATGPISTLSEGNPGRFWNTT. A glycan (N-linked (GlcNAc...) asparagine; by host) is linked at Asn2457. The chain crosses the membrane as a helical span at residues 2460–2480; it reads IAVSMANIFRGSYLAGAGLLF. Residues 2481–3391 lie on the Cytoplasmic side of the membrane; it reads SIMKNTTNTR…REEEEAGVLW (911 aa). Positions 2493–2755 constitute an mRNA cap 0-1 NS5-type MT domain; it reads TGNIGETLGE…DVDLGSGTRN (263 aa). Position 2547 (Ser2547) interacts with S-adenosyl-L-methionine. Phosphoserine is present on Ser2547. The active-site For 2'-O-MTase activity is Lys2552. An SUMO-interacting motif motif is present at residues 2568-2571; that stretch reads VVDL. 6 residues coordinate S-adenosyl-L-methionine: Gly2577, Trp2578, Thr2595, Lys2596, Asp2622, and Val2623. Asp2637 serves as the catalytic For 2'-O-MTase activity. Ile2638 lines the S-adenosyl-L-methionine pocket. Residues Lys2672 and Glu2708 each act as for 2'-O-MTase activity in the active site. Tyr2710 is an S-adenosyl-L-methionine binding site. Zn(2+) is bound by residues Glu2929, His2933, Cys2938, and Cys2941. Residues 3020–3169 enclose the RdRp catalytic domain; that stretch reads AMYADDTAGW…PLDDRLPSAL (150 aa). The Zn(2+) site is built by His3203, Cys3219, and Cys3338.

It in the N-terminal section; belongs to the class I-like SAM-binding methyltransferase superfamily. mRNA cap 0-1 NS5-type methyltransferase family. Homodimer. Interacts (via N-terminus) with host EXOC1 (via C-terminus); this interaction results in EXOC1 degradation through the proteasome degradation pathway. As to quaternary structure, forms heterodimers with envelope protein E in the endoplasmic reticulum and Golgi. In terms of assembly, homodimer; in the endoplasmic reticulum and Golgi. Interacts with protein prM. Interacts with non-structural protein 1. Homodimer; Homohexamer when secreted. Interacts with envelope protein E. Interacts with host PRKAA1. As to quaternary structure, interacts (via N-terminus) with serine protease NS3. In terms of assembly, forms a heterodimer with serine protease NS3. May form homooligomers. Forms a heterodimer with NS2B. Interacts with NS4B. Interacts with unphosphorylated RNA-directed RNA polymerase NS5; this interaction stimulates RNA-directed RNA polymerase NS5 guanylyltransferase activity. Interacts with host SHFL. As to quaternary structure, interacts with host MAVS; this interaction inhibits the synthesis of IFN-beta. Interacts with host SHFL. Interacts with host AUP1; the interaction occurs in the presence of Dengue virus NS4B and induces lipophagy which facilitates production of virus progeny particles. May interact with host SRPRA and SEC61G. In terms of assembly, interacts with serine protease NS3. Homodimer. Interacts with host STAT2; this interaction inhibits the phosphorylation of the latter, and, when all viral proteins are present (polyprotein), targets STAT2 for degradation. Interacts with serine protease NS3. Interacts with host PAF1 complex; the interaction may prevent the recruitment of the PAF1 complex to interferon-responsive genes, and thus reduces the immune response. In terms of processing, specific enzymatic cleavages in vivo yield mature proteins. Cleavages in the lumen of endoplasmic reticulum are performed by host signal peptidase, whereas cleavages in the cytoplasmic side are performed by serine protease NS3. Signal cleavage at the 2K-4B site requires a prior NS3 protease-mediated cleavage at the 4A-2K site. Cleaved in post-Golgi vesicles by a host furin, releasing the mature small envelope protein M, and peptide pr. This cleavage is incomplete as up to 30% of viral particles still carry uncleaved prM. Post-translationally, N-glycosylated. In terms of processing, N-glycosylated. The excreted form is glycosylated and this is required for efficient secretion of the protein from infected cells. Acetylated by host KAT5. Acetylation modulates NS3 RNA-binding and unwinding activities and plays an important positive role for viral replication. Post-translationally, sumoylation of RNA-directed RNA polymerase NS5 increases NS5 protein stability allowing proper viral RNA replication. In terms of processing, phosphorylated on serines residues. This phosphorylation may trigger NS5 nuclear localization.

The protein resides in the virion. The protein localises to the host nucleus. It is found in the host cytoplasm. Its subcellular location is the host perinuclear region. It localises to the secreted. The protein resides in the virion membrane. The protein localises to the host endoplasmic reticulum membrane. It is found in the host mitochondrion. It catalyses the reaction Selective hydrolysis of -Xaa-Xaa-|-Yaa- bonds in which each of the Xaa can be either Arg or Lys and Yaa can be either Ser or Ala.. It carries out the reaction RNA(n) + a ribonucleoside 5'-triphosphate = RNA(n+1) + diphosphate. The enzyme catalyses a ribonucleoside 5'-triphosphate + H2O = a ribonucleoside 5'-diphosphate + phosphate + H(+). The catalysed reaction is ATP + H2O = ADP + phosphate + H(+). It catalyses the reaction a 5'-end (5'-triphosphoguanosine)-ribonucleoside in mRNA + S-adenosyl-L-methionine = a 5'-end (N(7)-methyl 5'-triphosphoguanosine)-ribonucleoside in mRNA + S-adenosyl-L-homocysteine. It carries out the reaction a 5'-end (N(7)-methyl 5'-triphosphoguanosine)-ribonucleoside in mRNA + S-adenosyl-L-methionine = a 5'-end (N(7)-methyl 5'-triphosphoguanosine)-(2'-O-methyl-ribonucleoside) in mRNA + S-adenosyl-L-homocysteine + H(+). Plays a role in virus budding by binding to the cell membrane and gathering the viral RNA into a nucleocapsid that forms the core of a mature virus particle. During virus entry, may induce genome penetration into the host cytoplasm after hemifusion induced by the surface proteins. Can migrate to the cell nucleus where it modulates host functions. Overcomes the anti-viral effects of host EXOC1 by sequestering and degrading the latter through the proteasome degradation pathway. In terms of biological role, inhibits RNA silencing by interfering with host Dicer. Its function is as follows. Prevents premature fusion activity of envelope proteins in trans-Golgi by binding to envelope protein E at pH6.0. After virion release in extracellular space, gets dissociated from E dimers. Functionally, acts as a chaperone for envelope protein E during intracellular virion assembly by masking and inactivating envelope protein E fusion peptide. prM is the only viral peptide matured by host furin in the trans-Golgi network probably to avoid catastrophic activation of the viral fusion activity in acidic Golgi compartment prior to virion release. prM-E cleavage is inefficient, and many virions are only partially matured. These uncleaved prM would play a role in immune evasion. May play a role in virus budding. Exerts cytotoxic effects by activating a mitochondrial apoptotic pathway through M ectodomain. May display a viroporin activity. In terms of biological role, binds to host cell surface receptor and mediates fusion between viral and cellular membranes. Envelope protein is synthesized in the endoplasmic reticulum in the form of heterodimer with protein prM. They play a role in virion budding in the ER, and the newly formed immature particle is covered with 60 spikes composed of heterodimer between precursor prM and envelope protein E. The virion is transported to the Golgi apparatus where the low pH causes dissociation of PrM-E heterodimers and formation of E homodimers. prM-E cleavage is inefficient, and many virions are only partially matured. These uncleaved prM would play a role in immune evasion. Its function is as follows. Involved in immune evasion, pathogenesis and viral replication. Once cleaved off the polyprotein, is targeted to three destinations: the viral replication cycle, the plasma membrane and the extracellular compartment. Essential for viral replication. Required for formation of the replication complex and recruitment of other non-structural proteins to the ER-derived membrane structures. Excreted as a hexameric lipoparticle that plays a role against host immune response. Antagonizing the complement function. Binds to the host macrophages and dendritic cells. Inhibits signal transduction originating from Toll-like receptor 3 (TLR3). Mediates complement activation, which may contribute to the pathogenesis of the vascular leakage that occurs in severe dengue disease. Activates autophagy through the AMPK/ERK/mTOR signaling pathway. Mechanistically, acts as the assembly platform for STK11-AMPK interactions and promotes STK11-AMPK interactions. In turn, promotes phosphorylation of the AMPK kinase structural domain and activates AMPK, thereby positively regulating the AMPK/ERK/mTOR signaling pathway and inducing autophagy. Functionally, disrupts the host endothelial glycocalyx layer of host pulmonary microvascular endothelial cells, inducing degradation of sialic acid and shedding of heparan sulfate proteoglycans. NS1 induces expression of sialidases, heparanase, and activates cathepsin L, which activates heparanase via enzymatic cleavage. These effects are probably linked to the endothelial hyperpermeability observed in severe dengue disease. Component of the viral RNA replication complex that functions in virion assembly and antagonizes the host immune response. In terms of biological role, required cofactor for the serine protease function of NS3. May have membrane-destabilizing activity and form viroporins. Its function is as follows. Displays three enzymatic activities: serine protease, NTPase and RNA helicase. NS3 serine protease, in association with NS2B, performs its autocleavage and cleaves the polyprotein at dibasic sites in the cytoplasm: C-prM, NS2A-NS2B, NS2B-NS3, NS3-NS4A, NS4A-2K and NS4B-NS5. NS3 RNA helicase binds RNA and unwinds dsRNA in the 3' to 5' direction. Functionally, regulates the ATPase activity of the NS3 helicase activity. NS4A allows NS3 helicase to conserve energy during unwinding. Plays a role in the inhibition of the host innate immune response. Interacts with host MAVS and thereby prevents the interaction between RIGI and MAVS. In turn, IFN-beta production is impaired. Interacts with host AUP1 which mediates induction of lipophagy in host cells and facilitates production of virus progeny particles. Functions as a signal peptide for NS4B and is required for the interferon antagonism activity of the latter. In terms of biological role, induces the formation of ER-derived membrane vesicles where the viral replication takes place. Inhibits interferon (IFN)-induced host STAT1 phosphorylation and nuclear translocation, thereby preventing the establishment of cellular antiviral state by blocking the IFN-alpha/beta pathway. Its function is as follows. Replicates the viral (+) and (-) RNA genome, and performs the capping of genomes in the cytoplasm. NS5 methylates viral RNA cap at guanine N-7 and ribose 2'-O positions. Besides its role in RNA genome replication, also prevents the establishment of cellular antiviral state by blocking the interferon-alpha/beta (IFN-alpha/beta) signaling pathway. Inhibits host TYK2 and STAT2 phosphorylation, thereby preventing activation of JAK-STAT signaling pathway. May reduce immune responses by preventing the recruitment of the host PAF1 complex to interferon-responsive genes. The protein is Genome polyprotein of Dengue virus type 2 (strain 16681-PDK53) (DENV-2).